Consider the following 538-residue polypeptide: MHITNLGLHQVSFQSGDSYKGAEETGKHKGVSVISYQRVKNGERNKGIEALNRLYLQNQTSLTGKSLLFARDKAEVFCEAIKLAGGDTSKIKAMMERLDTYKLGEVNKRHINELNKVISEEIRAQLGIKNKKELQTKIKQIFTDYLNNKNWGPVNKNISHHGKNYSFQLTPASHMKIGNKNIFVKEYNGKGICCASTRERDHIANMWLSKVVDDEGKEIFSGIRHGVISAYGLKKNSSERAVAARNKAEELVSAALYSRPELLSQALSGKTVDLKIVSTSLLTPTSLTGGEESMLKDQVSALKGLNSKRGGPTKLLIRNSDGLLKEVSVNLKVVTFNFGVNELALKMGLGWRNVDKLNDESICSLLGDNFLKNGVIGGWAAEAIEKNPPCKNDVIYLANQIKEIVNNKLQKNDNGEPYKLSQRVTLLAYTIGAVPCWNCKSGKDRTGMQDAEIKREIIRKHETGQFSQLNSKLSSEEKRLFSTILMNSGNMEIQEMNTGVPGNKVMKKLPLSSLELSYSERIGDPKIWNMVKGYSSFV.

The active site involves C439. Positions 439-445 (CKSGKDR) match the CX5R motif motif.

This sequence belongs to the phosphatase IpgD/SopB family.

Its subcellular location is the secreted. It carries out the reaction a 1,2-diacyl-sn-glycero-3-phospho-(1D-myo-inositol-4,5-bisphosphate) + H2O = a 1,2-diacyl-sn-glycero-3-phospho-(1D-myo-inositol-5-phosphate) + phosphate. Its function is as follows. Converts phosphatidylinositol 4,5-bisphosphate (PtdIns 4,5-P2) to PtdIns 5-P. IpgD is injected by Shigella into the host cell and is required for invasion. The accumulation of PtdIns 5-P causes membrane ruffling and actin cytoskeleton rearrangements at the entry site. Acts in concert with IpaA to coordinate and control the membrane and cytoskeletal rearrangements induced early after invasion of the host cell. In Shigella flexneri, this protein is Inositol phosphate phosphatase IpgD (ipgD).